A 1428-amino-acid polypeptide reads, in one-letter code: Gag-Pol polyprotein (1428 aa).

The N-myristoyl glycine; by host moiety is linked to residue G2. The interaction with Gp41 stretch occupies residues 7-31 (VLSGKKLDSWEKIRLRPGGNKKYRL). The segment at 8–43 (LSGKKLDSWEKIRLRPGGNKKYRLKHLVWASRELEK) is interaction with host CALM1. Residues 12–19 (KLDSWEKI) form an interaction with host AP3D1 region. The segment at 14–33 (DSWEKIRLRPGGNKKYRLKH) is interaction with membrane phosphatidylinositol 4,5-bisphosphate and RNA. A Nuclear export signal motif is present at residues 16 to 22 (WEKIRLR). Residues 26 to 32 (NKKYRLK) carry the Nuclear localization signal motif. Residues 73 to 77 (EELRS) are interaction with membrane phosphatidylinositol 4,5-bisphosphate. Residues 108–130 (QNKNKQRTQQAAANTGSSQNYPI) are disordered. Over residues 114–130 (RTQQAAANTGSSQNYPI) the composition is skewed to polar residues. Phosphotyrosine; by host is present on Y128. The interaction with human PPIA/CYPA and NUP153 stretch occupies residues 185-223 (NVVGGHQAAMQMLKDTINEEAAEWDRLHPVHAGPIPPGQ). Positions 273-359 (YSPVSILDIR…GGPGHKARVL (87 aa)) are dimerization/Multimerization of capsid protein p24. CCHC-type zinc fingers lie at residues 384 to 401 (IKCF…NCRA) and 405 to 422 (KGCW…DCTE). The segment at 438–475 (EAREFSSEQTRANSPTSRNLWDGGKDDLPCETGAERQG) is disordered. Polar residues predominate over residues 444–456 (SEQTRANSPTSRN). Basic and acidic residues predominate over residues 460–475 (GGKDDLPCETGAERQG). The interval 482-486 (PQITL) is dimerization of protease. Residues 501–570 (IEALLDTGAD…TPVNIIGRNM (70 aa)) enclose the Peptidase A2 domain. D506 serves as the catalytic For protease activity; shared with dimeric partner. Dimerization of protease regions lie at residues 530–536 (GIGGFIK) and 569–581 (NMLT…LNFP). One can recognise a Reverse transcriptase domain in the interval 624-814 (EGKISKIGPE…PPFLWMGYEL (191 aa)). Positions 690, 765, and 766 each coordinate Mg(2+). The tract at residues 807–815 (FLWMGYELH) is RT 'primer grip'. Residues 978–994 (WEAWWMEYWQATWIPEW) carry the Tryptophan repeat motif motif. One can recognise an RNase H type-1 domain in the interval 1014-1137 (IAGAETFYVD…VDKLVSSGIR (124 aa)). Mg(2+)-binding residues include D1023, E1058, D1078, and D1129. Residues 1143-1184 (DGIDKAQEDHEKYHCNWRAMASDFNLPPVVAKEIVASCNKCQ) form an Integrase-type zinc finger. Residues H1152, H1156, C1180, and C1183 each coordinate Zn(2+). One can recognise an Integrase catalytic domain in the interval 1194-1344 (VDCSPGIWQL…SAGERIIDII (151 aa)). Positions 1204, 1256, and 1292 each coordinate Mg(2+). Positions 1363–1410 (FRVYYRDSRDPIWKGPAKLLWKGEGAVVIQDNSDIKVVPRRKAKIIRD) form a DNA-binding region, integrase-type.

As to quaternary structure, homotrimer; further assembles as hexamers of trimers. Interacts with gp41 (via C-terminus). Interacts with host CALM1; this interaction induces a conformational change in the Matrix protein, triggering exposure of the myristate group. Interacts with host AP3D1; this interaction allows the polyprotein trafficking to multivesicular bodies during virus assembly. Part of the pre-integration complex (PIC) which is composed of viral genome, matrix protein, Vpr and integrase. Homodimer; the homodimer further multimerizes as homohexamers or homopentamers. Interacts with human PPIA/CYPA; This interaction stabilizes the capsid. Interacts with human NUP153. Interacts with host PDZD8; this interaction stabilizes the capsid. Interacts with monkey TRIM5; this interaction destabilizes the capsid. In terms of assembly, homodimer, whose active site consists of two apposed aspartic acid residues. As to quaternary structure, heterodimer of p66 RT and p51 RT (RT p66/p51). Heterodimerization of RT is essential for DNA polymerase activity. The overall folding of the subdomains is similar in p66 RT and p51 RT but the spatial arrangements of the subdomains are dramatically different. Homotetramer; may further associate as a homohexadecamer. Part of the pre-integration complex (PIC) which is composed of viral genome, matrix protein, Vpr and integrase. Interacts with human SMARCB1/INI1 and human PSIP1/LEDGF isoform 1. Interacts with human KPNA3; this interaction might play a role in nuclear import of the pre-integration complex. Interacts with human NUP153; this interaction might play a role in nuclear import of the pre-integration complex. The cofactor is Mg(2+). Specific enzymatic cleavages by the viral protease yield mature proteins. The protease is released by autocatalytic cleavage. The polyprotein is cleaved during and after budding, this process is termed maturation. Proteolytic cleavage of p66 RT removes the RNase H domain to yield the p51 RT subunit. Nucleocapsid protein p7 might be further cleaved after virus entry. In terms of processing, tyrosine phosphorylated presumably in the virion by a host kinase. Phosphorylation is apparently not a major regulator of membrane association. Post-translationally, phosphorylated possibly by host MAPK1; this phosphorylation is necessary for Pin1-mediated virion uncoating. Methylated by host PRMT6, impairing its function by reducing RNA annealing and the initiation of reverse transcription.

Its subcellular location is the host cell membrane. It localises to the host endosome. The protein resides in the host multivesicular body. The protein localises to the virion membrane. It is found in the host nucleus. Its subcellular location is the host cytoplasm. It localises to the virion. The enzyme catalyses Specific for a P1 residue that is hydrophobic, and P1' variable, but often Pro.. It catalyses the reaction Endohydrolysis of RNA in RNA/DNA hybrids. Three different cleavage modes: 1. sequence-specific internal cleavage of RNA. Human immunodeficiency virus type 1 and Moloney murine leukemia virus enzymes prefer to cleave the RNA strand one nucleotide away from the RNA-DNA junction. 2. RNA 5'-end directed cleavage 13-19 nucleotides from the RNA end. 3. DNA 3'-end directed cleavage 15-20 nucleotides away from the primer terminus.. The catalysed reaction is 3'-end directed exonucleolytic cleavage of viral RNA-DNA hybrid.. It carries out the reaction DNA(n) + a 2'-deoxyribonucleoside 5'-triphosphate = DNA(n+1) + diphosphate. Its activity is regulated as follows. Protease: The viral protease is inhibited by many synthetic protease inhibitors (PIs), such as amprenavir, atazanavir, indinavir, loprinavir, nelfinavir, ritonavir and saquinavir. Use of protease inhibitors in tritherapy regimens permit more ambitious therapeutic strategies. Reverse transcriptase/ribonuclease H: RT can be inhibited either by nucleoside RT inhibitors (NRTIs) or by non nucleoside RT inhibitors (NNRTIs). NRTIs act as chain terminators, whereas NNRTIs inhibit DNA polymerization by binding a small hydrophobic pocket near the RT active site and inducing an allosteric change in this region. Classical NRTIs are abacavir, adefovir (PMEA), didanosine (ddI), lamivudine (3TC), stavudine (d4T), tenofovir (PMPA), zalcitabine (ddC), and zidovudine (AZT). Classical NNRTIs are atevirdine (BHAP U-87201E), delavirdine, efavirenz (DMP-266), emivirine (I-EBU), and nevirapine (BI-RG-587). The tritherapies used as a basic effective treatment of AIDS associate two NRTIs and one NNRTI. Functionally, mediates, with Gag polyprotein, the essential events in virion assembly, including binding the plasma membrane, making the protein-protein interactions necessary to create spherical particles, recruiting the viral Env proteins, and packaging the genomic RNA via direct interactions with the RNA packaging sequence (Psi). Gag-Pol polyprotein may regulate its own translation, by the binding genomic RNA in the 5'-UTR. At low concentration, the polyprotein would promote translation, whereas at high concentration, the polyprotein would encapsidate genomic RNA and then shut off translation. Its function is as follows. Targets the polyprotein to the plasma membrane via a multipartite membrane-binding signal, that includes its myristoylated N-terminus. Matrix protein is part of the pre-integration complex. Implicated in the release from host cell mediated by Vpu. Binds to RNA. In terms of biological role, forms the conical core that encapsulates the genomic RNA-nucleocapsid complex in the virion. Most core are conical, with only 7% tubular. The core is constituted by capsid protein hexamer subunits. The core is disassembled soon after virion entry. Host restriction factors such as TRIM5-alpha or TRIMCyp bind retroviral capsids and cause premature capsid disassembly, leading to blocks in reverse transcription. Capsid restriction by TRIM5 is one of the factors which restricts HIV-1 to the human species. Host PIN1 apparently facilitates the virion uncoating. On the other hand, interactions with PDZD8 or CYPA stabilize the capsid. Encapsulates and protects viral dimeric unspliced genomic RNA (gRNA). Binds these RNAs through its zinc fingers. Acts as a nucleic acid chaperone which is involved in rearangement of nucleic acid secondary structure during gRNA retrotranscription. Also facilitates template switch leading to recombination. As part of the polyprotein, participates in gRNA dimerization, packaging, tRNA incorporation and virion assembly. Functionally, aspartyl protease that mediates proteolytic cleavages of Gag and Gag-Pol polyproteins during or shortly after the release of the virion from the plasma membrane. Cleavages take place as an ordered, step-wise cascade to yield mature proteins. This process is called maturation. Displays maximal activity during the budding process just prior to particle release from the cell. Also cleaves Nef and Vif, probably concomitantly with viral structural proteins on maturation of virus particles. Hydrolyzes host EIF4GI and PABP1 in order to shut off the capped cellular mRNA translation. The resulting inhibition of cellular protein synthesis serves to ensure maximal viral gene expression and to evade host immune response. Also mediates cleavage of host YTHDF3. Mediates cleavage of host CARD8, thereby activating the CARD8 inflammasome, leading to the clearance of latent HIV-1 in patient CD4(+) T-cells after viral reactivation; in contrast, HIV-1 can evade CARD8-sensing when its protease remains inactive in infected cells prior to viral budding. Its function is as follows. Multifunctional enzyme that converts the viral RNA genome into dsDNA in the cytoplasm, shortly after virus entry into the cell. This enzyme displays a DNA polymerase activity that can copy either DNA or RNA templates, and a ribonuclease H (RNase H) activity that cleaves the RNA strand of RNA-DNA heteroduplexes in a partially processive 3' to 5' endonucleasic mode. Conversion of viral genomic RNA into dsDNA requires many steps. A tRNA(3)-Lys binds to the primer-binding site (PBS) situated at the 5'-end of the viral RNA. RT uses the 3' end of the tRNA primer to perform a short round of RNA-dependent minus-strand DNA synthesis. The reading proceeds through the U5 region and ends after the repeated (R) region which is present at both ends of viral RNA. The portion of the RNA-DNA heteroduplex is digested by the RNase H, resulting in a ssDNA product attached to the tRNA primer. This ssDNA/tRNA hybridizes with the identical R region situated at the 3' end of viral RNA. This template exchange, known as minus-strand DNA strong stop transfer, can be either intra- or intermolecular. RT uses the 3' end of this newly synthesized short ssDNA to perform the RNA-dependent minus-strand DNA synthesis of the whole template. RNase H digests the RNA template except for two polypurine tracts (PPTs) situated at the 5'-end and near the center of the genome. It is not clear if both polymerase and RNase H activities are simultaneous. RNase H probably can proceed both in a polymerase-dependent (RNA cut into small fragments by the same RT performing DNA synthesis) and a polymerase-independent mode (cleavage of remaining RNA fragments by free RTs). Secondly, RT performs DNA-directed plus-strand DNA synthesis using the PPTs that have not been removed by RNase H as primers. PPTs and tRNA primers are then removed by RNase H. The 3' and 5' ssDNA PBS regions hybridize to form a circular dsDNA intermediate. Strand displacement synthesis by RT to the PBS and PPT ends produces a blunt ended, linear dsDNA copy of the viral genome that includes long terminal repeats (LTRs) at both ends. In terms of biological role, catalyzes viral DNA integration into the host chromosome, by performing a series of DNA cutting and joining reactions. This enzyme activity takes place after virion entry into a cell and reverse transcription of the RNA genome in dsDNA. The first step in the integration process is 3' processing. This step requires a complex comprising the viral genome, matrix protein, Vpr and integrase. This complex is called the pre-integration complex (PIC). The integrase protein removes 2 nucleotides from each 3' end of the viral DNA, leaving recessed CA OH's at the 3' ends. In the second step, the PIC enters cell nucleus. This process is mediated through integrase and Vpr proteins, and allows the virus to infect a non dividing cell. This ability to enter the nucleus is specific of lentiviruses, other retroviruses cannot and rely on cell division to access cell chromosomes. In the third step, termed strand transfer, the integrase protein joins the previously processed 3' ends to the 5' ends of strands of target cellular DNA at the site of integration. The 5'-ends are produced by integrase-catalyzed staggered cuts, 5 bp apart. A Y-shaped, gapped, recombination intermediate results, with the 5'-ends of the viral DNA strands and the 3' ends of target DNA strands remaining unjoined, flanking a gap of 5 bp. The last step is viral DNA integration into host chromosome. This involves host DNA repair synthesis in which the 5 bp gaps between the unjoined strands are filled in and then ligated. Since this process occurs at both cuts flanking the HIV genome, a 5 bp duplication of host DNA is produced at the ends of HIV-1 integration. Alternatively, Integrase may catalyze the excision of viral DNA just after strand transfer, this is termed disintegration. This is Gag-Pol polyprotein (gag-pol) from Human immunodeficiency virus type 1 group M subtype A (isolate U455) (HIV-1).